The sequence spans 406 residues: Putative 12-oxophytodienoate reductase 12 (406 aa).

FMN contacts are provided by residues 41–43, A74, and Q119; that span reads PLT. 188-191 is a binding site for substrate; the sequence is HAAN. FMN-binding positions include R240, G317, and 338-339; that span reads GR.

Belongs to the NADH:flavin oxidoreductase/NADH oxidase family. It depends on FMN as a cofactor.

In terms of biological role, putative oxophytodienoate reductase that may be involved in the biosynthesis or metabolism of oxylipin signaling molecules. This is Putative 12-oxophytodienoate reductase 12 (OPR12) from Oryza sativa subsp. japonica (Rice).